The sequence spans 127 residues: Small ribosomal subunit protein uS11c (127 aa).

It belongs to the universal ribosomal protein uS11 family. As to quaternary structure, part of the 30S ribosomal subunit.

The protein localises to the plastid. It localises to the chloroplast. This is Small ribosomal subunit protein uS11c from Heterosigma akashiwo (strain NIES-293 / 8280G21-1).